Reading from the N-terminus, the 350-residue chain is Nuclear pore complex-interacting protein family member A3 (350 aa).

The interval 306-325 is disordered; sequence KTPPECLLTPLPPSAPPSVD.

It belongs to the NPIP family.

The sequence is that of Nuclear pore complex-interacting protein family member A3 (NPIPA3) from Homo sapiens (Human).